The chain runs to 145 residues: MSLMTPLLIRDVLKALPHRYPFVLVDRVFSTENGEVHALKNVTINEPFFMGHFPTEPVMPGVLITEALAQASMFCLHGQMEPGQIGYLAGIEGARFKRKVIPGDQLHLHAKLEFLRRGLGKTTCRAEVDGEVAAEMQILFAVAKG.

H52 is a catalytic residue.

It belongs to the thioester dehydratase family. FabZ subfamily.

The protein localises to the cytoplasm. The catalysed reaction is a (3R)-hydroxyacyl-[ACP] = a (2E)-enoyl-[ACP] + H2O. Functionally, involved in unsaturated fatty acids biosynthesis. Catalyzes the dehydration of short chain beta-hydroxyacyl-ACPs and long chain saturated and unsaturated beta-hydroxyacyl-ACPs. The sequence is that of 3-hydroxyacyl-[acyl-carrier-protein] dehydratase FabZ from Deinococcus radiodurans (strain ATCC 13939 / DSM 20539 / JCM 16871 / CCUG 27074 / LMG 4051 / NBRC 15346 / NCIMB 9279 / VKM B-1422 / R1).